The following is a 1113-amino-acid chain: Protein MGA2 (1113 aa).

The segment at 91-114 is disordered; the sequence is TPLEEEMESNRALKEEEEDEHENK. Ser255 bears the Phosphoserine mark. Composition is skewed to polar residues over residues 344-357 and 437-452; these read DTTK…SSRR and HIPS…SESF. Disordered regions lie at residues 344–376 and 437–462; these read DTTK…NNQL and HIPS…NDNP. The residue at position 467 (Ser467) is a Phosphoserine. Residues 530 to 610 form the IPT/TIG domain; the sequence is PSINRVIPSQ…NENNNDDLPQ (81 aa). The disordered stretch occupies residues 658-687; sequence IVGNDSPDSGTNGNSCSKSTGPSPNQHSMN. The span at 663 to 687 shows a compositional bias: polar residues; sequence SPDSGTNGNSCSKSTGPSPNQHSMN. 2 ANK repeats span residues 719–748 and 752–781; these read LGRT…RVND and FGLT…NYSL. A helical membrane pass occupies residues 1037 to 1054; sequence MLIFFWIPLTLLLLTWFI.

The protein resides in the membrane. The protein is Protein MGA2 (MGA2) of Saccharomyces cerevisiae (strain ATCC 204508 / S288c) (Baker's yeast).